A 162-amino-acid chain; its full sequence is Interleukin-2 (162 aa).

The signal sequence occupies residues 1–20; it reads MYKIQLLSCIALTLALVANG. Threonine 23 is a glycosylation site (O-linked (GalNAc...) threonine). N-linked (GlcNAc...) asparagine glycosylation is present at asparagine 70. A disulfide bond links cysteine 79 and cysteine 134.

Belongs to the IL-2 family.

The protein localises to the secreted. Its function is as follows. Cytokine produced by activated CD4-positive helper T-cells and to a lesser extend activated CD8-positive T-cells and natural killer (NK) cells that plays pivotal roles in the immune response and tolerance. Binds to a receptor complex composed of either the high-affinity trimeric IL-2R (IL2RA/CD25, IL2RB/CD122 and IL2RG/CD132) or the low-affinity dimeric IL-2R (IL2RB and IL2RG). Interaction with the receptor leads to oligomerization and conformation changes in the IL-2R subunits resulting in downstream signaling starting with phosphorylation of JAK1 and JAK3. In turn, JAK1 and JAK3 phosphorylate the receptor to form a docking site leading to the phosphorylation of several substrates including STAT5. This process leads to activation of several pathways including STAT, phosphoinositide-3-kinase/PI3K and mitogen-activated protein kinase/MAPK pathways. Functions as a T-cell growth factor and can increase NK-cell cytolytic activity as well. Promotes strong proliferation of activated B-cells and subsequently immunoglobulin production. Plays a pivotal role in regulating the adaptive immune system by controlling the survival and proliferation of regulatory T-cells, which are required for the maintenance of immune tolerance. Moreover, participates in the differentiation and homeostasis of effector T-cell subsets, including Th1, Th2, Th17 as well as memory CD8-positive T-cells. In Cervus elaphus (Red deer), this protein is Interleukin-2 (IL2).